Reading from the N-terminus, the 674-residue chain is Protein asunder (674 aa).

Residues 516-538 (HKAKDQYRLLYRELEQLIQLNAS) are a coiled coil. Positions 560 to 579 (PSKSEAGTANLRSFTESPLS) are disordered. The segment covering 564–577 (EAGTANLRSFTESP) has biased composition (polar residues). Positions 601-607 (LKASKRR) match the Nuclear localization signal (NLS) motif.

The protein belongs to the Integrator subunit 13 family. As to quaternary structure, belongs to the multiprotein complex Integrator, at least composed of IntS1, IntS2, IntS3, IntS4, omd/IntS5, IntS6, defl/IntS7, IntS8, IntS9, IntS10, IntS11, IntS12, asun/IntS13, IntS14 and IntS15. The core complex associates with protein phosphatase 2A subunits mts/PP2A and Pp2A-29B, to form the Integrator-PP2A (INTAC) complex. Post-translationally, phosphorylated.

It is found in the nucleus. It localises to the cytoplasm. The protein resides in the perinuclear region. In terms of biological role, component of the integrator complex, a multiprotein complex that terminates RNA polymerase II (Pol II) transcription in the promoter-proximal region of genes. The integrator complex provides a quality checkpoint during transcription elongation by driving premature transcription termination of transcripts that are unfavorably configured for transcriptional elongation: the complex terminates transcription by (1) catalyzing dephosphorylation of the C-terminal domain (CTD) of Pol II subunit Polr2A/Rbp1 and Spt5, and (2) degrading the exiting nascent RNA transcript via endonuclease activity. The integrator complex is also involved in the 3'-end processing of the U7 snRNA, and also the spliceosomal snRNAs U1, U2, U4 and U5. This is Protein asunder (asun) from Drosophila pseudoobscura pseudoobscura (Fruit fly).